Consider the following 131-residue polypeptide: Protein TIFY 5A (131 aa).

The short motif at Leu-9 to Leu-13 is the EAR element. Disordered regions lie at residues Phe-14–Gln-44 and Arg-74–Arg-131. Over residues Thr-16 to Ser-34 the composition is skewed to low complexity. Residues Pro-39 to Arg-74 form the Tify domain. Residues Lys-79–Pro-100 show a composition bias toward polar residues. Positions Ser-105–Tyr-127 match the Jas motif. The Nuclear localization signal motif lies at Met-106–Phe-113. The segment covering Gln-122–Arg-131 has biased composition (polar residues).

Belongs to the TIFY/JAZ family. As to quaternary structure, interacts with TPL and weakly with COI1, but not with AFPH2/NINJA. Interacts with MYC2, MYB21, MYB24, TIFY10A/JAZ1, TIFY10B/JAZ2, TIFY6B/JAZ3, TIFY6A/JAZ4, TIFY11A/JAZ5, TIFY11B/JAZ6, TIFY7/JAZ9, TIFY9/JAZ10 and TIFY3B/JAZ12. Interacts with RHD6 and RSL1. (Microbial infection) Interacts with the pathogenic Pseudomonas syringae HopZ1a protein. Post-translationally, (Microbial infection) Acetylated by Pseudomonas syringae HopZ1a. In terms of processing, ubiquitinated.

The protein localises to the nucleus. Its function is as follows. Repressor of jasmonate responses. Unable to associate strongly with COI1 in the presence of jasmonoyl-isoleucine (JA-Ile) and is therefore more resistant to JA-mediated-degradation than other TIFY/JAZ proteins. Repress gene expression through direct recruitment of the corepressor TOPLESS to cognate transcription factors. Interacts with and suppresses RHD6 and RSL1 transcription factor activities to negatively regulate jasmonate-stimulated root hair development. In Arabidopsis thaliana (Mouse-ear cress), this protein is Protein TIFY 5A.